The sequence spans 783 residues: Probable galactinol--sucrose galactosyltransferase 5 (783 aa).

2 positions are modified to phosphoserine: serine 9 and serine 11.

It belongs to the glycosyl hydrolases 36 family.

It carries out the reaction alpha-D-galactosyl-(1-&gt;3)-1D-myo-inositol + sucrose = raffinose + myo-inositol. Its function is as follows. Transglycosidase operating by a ping-pong reaction mechanism. Involved in the synthesis of raffinose, a major soluble carbohydrate in seeds, roots and tubers. The polypeptide is Probable galactinol--sucrose galactosyltransferase 5 (RFS5) (Arabidopsis thaliana (Mouse-ear cress)).